We begin with the raw amino-acid sequence, 285 residues long: Diphthine methyl ester synthase (285 aa).

Residues L9, D84, G87, 112-113 (SI), and L163 each bind S-adenosyl-L-methionine. S171 is subject to Phosphoserine. Residues V225 and H250 each coordinate S-adenosyl-L-methionine.

The protein belongs to the diphthine synthase family.

The enzyme catalyses 2-[(3S)-amino-3-carboxypropyl]-L-histidyl-[translation elongation factor 2] + 4 S-adenosyl-L-methionine = diphthine methyl ester-[translation elongation factor 2] + 4 S-adenosyl-L-homocysteine + 3 H(+). It participates in protein modification; peptidyl-diphthamide biosynthesis. Its function is as follows. S-adenosyl-L-methionine-dependent methyltransferase that catalyzes four methylations of the modified target histidine residue in translation elongation factor 2 (EF-2), to form an intermediate called diphthine methyl ester. The four successive methylation reactions represent the second step of diphthamide biosynthesis. In Homo sapiens (Human), this protein is Diphthine methyl ester synthase (DPH5).